The following is a 93-amino-acid chain: Parbolysin P2 (93 aa).

Disulfide bonds link cysteine 16–cysteine 37 and cysteine 22–cysteine 33.

Belongs to the worm cytolysin family. Localized within the skin and proboscis and are most readily isolated from body mucus secretions.

The protein resides in the secreted. Its function is as follows. Cytolysin that shows hemolytic activity (on bovine erythrocytes, HC(50)=5.75 mg/ml). This hemolytic activity is completely inhibited by small unilamelar vesicles composed of PC/PG, PC/PI and PC/PS in 1:1 molar ratios (with at least 100 mg/ml concentration). The sequence is that of Parbolysin P2 from Parborlasia corrugatus (Antarctic nemertean worm).